We begin with the raw amino-acid sequence, 92 residues long: Protein canopy homolog 1 (92 aa).

It belongs to the canopy family.

This is Protein canopy homolog 1 (CNPY1) from Homo sapiens (Human).